A 588-amino-acid polypeptide reads, in one-letter code: Pescadillo homolog (588 aa).

The segment at 1-54 (MGGLEKKKYERGSATNYITRNKARKKLQLSLADFRRLCILKGIYPHEPKHKKKV) is required for 28S ribosomal RNA processing. The segment at 1-257 (MGGLEKKKYE…PKLEGQAQAE (257 aa)) is sufficient for nucleolar localization. K98 is subject to N6-acetyllysine. Positions 294-314 (EAEVDEFPTDGEMSAQEEDRR) are disordered. The tract at residues 306–415 (MSAQEEDRRK…LLLPVAEYFS (110 aa)) is sufficient for interaction with MAP1B. Residues 322–415 (KHKKLFEGLK…LLLPVAEYFS (94 aa)) form the BRCT domain. The disordered stretch occupies residues 448 to 515 (GEDPGNLNES…GKKPRVMAGT (68 aa)). Over residues 456–486 (ESEEEEEEDDNNEGDGDEEGENEEEEEDAEA) the composition is skewed to acidic residues. The span at 487 to 508 (GSEKEEEARLAALEEQRMEGKK) shows a compositional bias: basic and acidic residues. Residue K517 forms a Glycyl lysine isopeptide (Lys-Gly) (interchain with G-Cter in SUMO1); alternate linkage. Residue K517 forms a Glycyl lysine isopeptide (Lys-Gly) (interchain with G-Cter in SUMO2); alternate linkage. Positions 539–588 (MMKKREKYLYQKIMFGKRRKIREANKLAEKRKAHDEAVRSEKKAKKARPE) are required for 28S ribosomal RNA processing. The disordered stretch occupies residues 565 to 588 (LAEKRKAHDEAVRSEKKAKKARPE).

This sequence belongs to the pescadillo family. In terms of assembly, component of the PeBoW complex, composed of BOP1, PES1 and WDR12. The complex is held together by BOP1, which interacts with PES1 via its N-terminal domain and with WDR12 via a high-affinity interaction between the seven-bladed beta-propeller domains of the 2 proteins. The PeBoW complex associates with the 66S pre-ribosome. The PeBoW complex also associates with DDX27, PES1 interacts directly with DDX27. Interacts with IRS1 and UBTF. May interact with MAP1B. Sumoylated. Significant levels are detected in a variety of cancer cell lines, including glioblastoma, breast carcinoma, colon carcinoma and cervical carcinoma cells. Levels are abnormally elevated in malignant tumors of astrocytic origin.

Its subcellular location is the nucleus. The protein resides in the nucleolus. The protein localises to the nucleoplasm. It is found in the chromosome. Its function is as follows. Component of the PeBoW complex, which is required for maturation of 28S and 5.8S ribosomal RNAs and formation of the 60S ribosome. The polypeptide is Pescadillo homolog (Homo sapiens (Human)).